We begin with the raw amino-acid sequence, 155 residues long: Small ribosomal subunit protein uS7 (155 aa).

The protein belongs to the universal ribosomal protein uS7 family. As to quaternary structure, part of the 30S ribosomal subunit. Contacts proteins S9 and S11.

Functionally, one of the primary rRNA binding proteins, it binds directly to 16S rRNA where it nucleates assembly of the head domain of the 30S subunit. Is located at the subunit interface close to the decoding center, probably blocks exit of the E-site tRNA. The polypeptide is Small ribosomal subunit protein uS7 (Mycoplasma pneumoniae (strain ATCC 29342 / M129 / Subtype 1) (Mycoplasmoides pneumoniae)).